The sequence spans 102 residues: Aspartyl/glutamyl-tRNA(Asn/Gln) amidotransferase subunit C (102 aa).

This sequence belongs to the GatC family. In terms of assembly, heterotrimer of A, B and C subunits.

The enzyme catalyses L-glutamyl-tRNA(Gln) + L-glutamine + ATP + H2O = L-glutaminyl-tRNA(Gln) + L-glutamate + ADP + phosphate + H(+). The catalysed reaction is L-aspartyl-tRNA(Asn) + L-glutamine + ATP + H2O = L-asparaginyl-tRNA(Asn) + L-glutamate + ADP + phosphate + 2 H(+). Its function is as follows. Allows the formation of correctly charged Asn-tRNA(Asn) or Gln-tRNA(Gln) through the transamidation of misacylated Asp-tRNA(Asn) or Glu-tRNA(Gln) in organisms which lack either or both of asparaginyl-tRNA or glutaminyl-tRNA synthetases. The reaction takes place in the presence of glutamine and ATP through an activated phospho-Asp-tRNA(Asn) or phospho-Glu-tRNA(Gln). The protein is Aspartyl/glutamyl-tRNA(Asn/Gln) amidotransferase subunit C of Bordetella pertussis (strain Tohama I / ATCC BAA-589 / NCTC 13251).